A 268-amino-acid polypeptide reads, in one-letter code: Deoxyuridine 5'-triphosphate nucleotidohydrolase (268 aa).

Substrate is bound by residues 172–174 and 263–264; these read RSS and FG.

Belongs to the dUTPase family. Mg(2+) serves as cofactor.

The enzyme catalyses dUTP + H2O = dUMP + diphosphate + H(+). Functionally, involved in nucleotide metabolism: produces dUMP, the immediate precursor of thymidine nucleotides and decreases the intracellular concentration of dUTP to avoid uracil incorporation into viral DNA. This is Deoxyuridine 5'-triphosphate nucleotidohydrolase from Suid herpesvirus 1 (strain Kaplan) (SuHV-1).